The following is a 134-amino-acid chain: UPF0412 protein YaaI (134 aa).

A signal peptide spans 1–23 (MRSVLTISASLLFGLALSSVAHA).

It belongs to the UPF0412 family.

The sequence is that of UPF0412 protein YaaI from Salmonella choleraesuis (strain SC-B67).